The primary structure comprises 589 residues: ATP-dependent lipid A-core flippase (589 aa).

A run of 5 helical transmembrane segments spans residues 29–49 (LLLVAALIAALIEAAGTTGFL), 70–90 (WLPVQIILLFVVRGIAGYITD), 157–177 (VIGALALMLWHSWQVTLTILV), 261–281 (MIGAIGLSALLFVAGAQALAG), and 283–303 (LTAGDFVVLMTSMLTIIPGLK). The ABC transmembrane type-1 domain maps to 32–314 (VAALIAALIE…LTNVQNMVQR (283 aa)). One can recognise an ABC transporter domain in the interval 346–582 (IEFRDVTARY…GGLYSHLHGM (237 aa)). 380–387 (GRSGSGKS) contributes to the ATP binding site.

The protein belongs to the ABC transporter superfamily. Lipid exporter (TC 3.A.1.106) family. In terms of assembly, homodimer.

It is found in the cell inner membrane. The catalysed reaction is ATP + H2O + lipid A-core oligosaccharideSide 1 = ADP + phosphate + lipid A-core oligosaccharideSide 2.. Its function is as follows. Involved in lipopolysaccharide (LPS) biosynthesis. Translocates lipid A-core from the inner to the outer leaflet of the inner membrane. Transmembrane domains (TMD) form a pore in the inner membrane and the ATP-binding domain (NBD) is responsible for energy generation. The sequence is that of ATP-dependent lipid A-core flippase from Xanthomonas oryzae pv. oryzae (strain MAFF 311018).